A 156-amino-acid chain; its full sequence is ATP synthase subunit b (156 aa).

A helical membrane pass occupies residues 7–29 (LIGQSLTFIAFILFCMKYVWPQL).

Belongs to the ATPase B chain family. F-type ATPases have 2 components, F(1) - the catalytic core - and F(0) - the membrane proton channel. F(1) has five subunits: alpha(3), beta(3), gamma(1), delta(1), epsilon(1). F(0) has three main subunits: a(1), b(2) and c(10-14). The alpha and beta chains form an alternating ring which encloses part of the gamma chain. F(1) is attached to F(0) by a central stalk formed by the gamma and epsilon chains, while a peripheral stalk is formed by the delta and b chains.

The protein resides in the cell inner membrane. In terms of biological role, f(1)F(0) ATP synthase produces ATP from ADP in the presence of a proton or sodium gradient. F-type ATPases consist of two structural domains, F(1) containing the extramembraneous catalytic core and F(0) containing the membrane proton channel, linked together by a central stalk and a peripheral stalk. During catalysis, ATP synthesis in the catalytic domain of F(1) is coupled via a rotary mechanism of the central stalk subunits to proton translocation. Its function is as follows. Component of the F(0) channel, it forms part of the peripheral stalk, linking F(1) to F(0). The sequence is that of ATP synthase subunit b from Saccharophagus degradans (strain 2-40 / ATCC 43961 / DSM 17024).